A 342-amino-acid chain; its full sequence is MKRMIALDGAQGEGGGQILRSALSLSMITGQPFTITGIRAGRAKPGLLRQHLTAVKAATEICRATVEGAELGSQRLVFRPGTVRGGDYRFAIGSAGSCTLVLQTVLPALWFADGPSRVEVSGGTDNPSAPPADFIRRVLEPLLAKIGIHQQTTLLRHGFYPVGGGVVATEVSPVASFNTLQLGERGNIVQMRGEVLLAGVPRHVAEREIATLAGSFPLHEQYIHNLPRDQGPGNTVSLEVESENITERFFVVGEKHVSAEVVAAQLVKEVKRYLASPAAVGEYLADQLVLPMALAGAGQFTVAHPSCHLLTNIAVVERFLPVRFTLAETNGVTRVMITKLTD.

ATP-binding positions include Q103 and 283 to 287 (YLADQ). H308 serves as the catalytic Tele-AMP-histidine intermediate.

The protein belongs to the RNA 3'-terminal cyclase family. Type 1 subfamily.

The protein resides in the cytoplasm. The catalysed reaction is a 3'-end 3'-phospho-ribonucleotide-RNA + ATP = a 3'-end 2',3'-cyclophospho-ribonucleotide-RNA + AMP + diphosphate. In terms of biological role, catalyzes the conversion of 3'-phosphate to a 2',3'-cyclic phosphodiester at the end of RNA. The mechanism of action of the enzyme occurs in 3 steps: (A) adenylation of the enzyme by ATP; (B) transfer of adenylate to an RNA-N3'P to produce RNA-N3'PP5'A; (C) and attack of the adjacent 2'-hydroxyl on the 3'-phosphorus in the diester linkage to produce the cyclic end product. The biological role of this enzyme is unknown but it is likely to function in some aspects of cellular RNA processing. In Shigella dysenteriae serotype 1 (strain Sd197), this protein is RNA 3'-terminal phosphate cyclase.